A 510-amino-acid polypeptide reads, in one-letter code: Light-independent protochlorophyllide reductase subunit B (510 aa).

Asp36 lines the [4Fe-4S] cluster pocket. Residue Asp296 is the Proton donor of the active site. 431 to 432 (GM) lines the substrate pocket.

The protein belongs to the ChlB/BchB/BchZ family. Protochlorophyllide reductase is composed of three subunits; ChlL, ChlN and ChlB. Forms a heterotetramer of two ChlB and two ChlN subunits. [4Fe-4S] cluster is required as a cofactor.

It localises to the plastid. The protein resides in the chloroplast. It catalyses the reaction chlorophyllide a + oxidized 2[4Fe-4S]-[ferredoxin] + 2 ADP + 2 phosphate = protochlorophyllide a + reduced 2[4Fe-4S]-[ferredoxin] + 2 ATP + 2 H2O. It participates in porphyrin-containing compound metabolism; chlorophyll biosynthesis (light-independent). Component of the dark-operative protochlorophyllide reductase (DPOR) that uses Mg-ATP and reduced ferredoxin to reduce ring D of protochlorophyllide (Pchlide) to form chlorophyllide a (Chlide). This reaction is light-independent. The NB-protein (ChlN-ChlB) is the catalytic component of the complex. The protein is Light-independent protochlorophyllide reductase subunit B of Chlorokybus atmophyticus (Soil alga).